We begin with the raw amino-acid sequence, 78 residues long: Hainantoxin-XX (78 aa).

The N-terminal stretch at 1 to 23 (MKSATLLALSFLLIALYFLICEA) is a signal peptide. The propeptide occupies 24-47 (EHSRYEEHEILEENMGDVVNLEQR). 3 disulfide bridges follow: cysteine 49–cysteine 62, cysteine 56–cysteine 66, and cysteine 61–cysteine 77.

The protein belongs to the hainantoxin family. 20 subfamily. As to expression, expressed by the venom gland.

It is found in the secreted. Its function is as follows. Putative ion channel inhibitor. The polypeptide is Hainantoxin-XX (Cyriopagopus hainanus (Chinese bird spider)).